Consider the following 349-residue polypeptide: Dihydroorotase (349 aa).

Residues His17 and His19 each coordinate Zn(2+). Residues 19–21 and Asn45 contribute to the substrate site; that span reads HLR. Zn(2+) contacts are provided by Lys103, His140, and His178. Position 103 is an N6-carboxylysine (Lys103). Residue His140 participates in substrate binding. Leu224 lines the substrate pocket. Asp252 contributes to the Zn(2+) binding site. The active site involves Asp252. Residues His256 and Ala268 each contribute to the substrate site.

Belongs to the metallo-dependent hydrolases superfamily. DHOase family. Class II DHOase subfamily. As to quaternary structure, homodimer. Zn(2+) serves as cofactor.

It carries out the reaction (S)-dihydroorotate + H2O = N-carbamoyl-L-aspartate + H(+). Its pathway is pyrimidine metabolism; UMP biosynthesis via de novo pathway; (S)-dihydroorotate from bicarbonate: step 3/3. Functionally, catalyzes the reversible cyclization of carbamoyl aspartate to dihydroorotate. In Buchnera aphidicola subsp. Schizaphis graminum (strain Sg), this protein is Dihydroorotase.